The chain runs to 131 residues: Actin-associated protein FAM107A (131 aa).

Residues Val57 to Lys77 are a coiled coil. Residues Arg61–Glu71 carry the Nuclear localization signal motif.

Interacts with ACTB. Interacts with COMMD1; this interaction stabilizes COMMD1 in the nucleus. Interacts with MAP1A. Interacts with PRDX1. Interacts with F-actin.

The protein resides in the nucleus. It localises to the cytoplasm. The protein localises to the cytoskeleton. Its subcellular location is the stress fiber. It is found in the cell junction. The protein resides in the focal adhesion. It localises to the cell projection. The protein localises to the ruffle membrane. Its subcellular location is the synapse. In terms of biological role, stress-inducible actin-binding protein that plays a role in synaptic and cognitive functions by modulating actin filamentous (F-actin) dynamics. Mediates polymerization of globular actin to F-actin. Also binds to, stabilizes and bundles F-actin. Involved in synaptic function by regulating neurite outgrowth in an actin-dependent manner and for the acquisition of hippocampus-dependent cognitive function, such as learning and long-term memory. Plays a role in the actin and microtubule cytoskeleton organization; negatively regulates focal adhesion (FA) assembly promoting malignant glial cell migration in an actin-, microtubule- and MAP1A-dependent manner. Also involved in neuroblastoma G1/S phase cell cycle progression and cell proliferation inhibition by stimulating ubiquitination of NF-kappa-B subunit RELA and NF-kappa-B degradation in a COMMD1- and actin-dependent manner. May play a role in tumor development. The protein is Actin-associated protein FAM107A of Rattus norvegicus (Rat).